The sequence spans 667 residues: Probable potassium transport system protein Kup (667 aa).

A run of 12 helical transmembrane segments spans residues 5 to 25 (GLLIAIGIVYGDIGTSPLYVM), 47 to 67 (ISLILWTVTLLTTVQTVIIAL), 88 to 108 (AAWLVWPALIGGAAILADGTL), 133 to 153 (VSNQTTVLVITIVILLVLFSI), 164 to 184 (AFGPIMLVWFAFLGVMGLINI), 210 to 230 (AGFAILGSIFLATTGAEALYS), 243 to 263 (SWPFVFVCLSLNYFGQGVWIL), 287 to 307 (LASIVLATLAAIIASQALITG), 336 to 356 (IYIPAVNKMLGITTIALVLFF), 367 to 387 (GLSITISMLTTTILLYEWLVL), 393 to 413 (LANLLFVIFFSTINILFMGSS), and 420 to 440 (GGYVSLLITLLIASVMVVWYF).

The protein belongs to the HAK/KUP transporter (TC 2.A.72) family.

Its subcellular location is the cell membrane. The catalysed reaction is K(+)(in) + H(+)(in) = K(+)(out) + H(+)(out). Its function is as follows. Transport of potassium into the cell. Likely operates as a K(+):H(+) symporter. This chain is Probable potassium transport system protein Kup, found in Lactobacillus delbrueckii subsp. bulgaricus (strain ATCC 11842 / DSM 20081 / BCRC 10696 / JCM 1002 / NBRC 13953 / NCIMB 11778 / NCTC 12712 / WDCM 00102 / Lb 14).